Reading from the N-terminus, the 510-residue chain is Beta-galactosidase (510 aa).

Catalysis depends on Glu-210, which acts as the Proton donor. Glu-414 (nucleophile) is an active-site residue.

It belongs to the glycosyl hydrolase 1 family.

The catalysed reaction is Hydrolysis of terminal non-reducing beta-D-galactose residues in beta-D-galactosides.. This Pyrococcus woesei protein is Beta-galactosidase.